Consider the following 338-residue polypeptide: DNA-directed RNA polymerase subunit alpha (338 aa).

The alpha N-terminal domain (alpha-NTD) stretch occupies residues 1–234 (MIHKNWAELI…DQLSIFVNFE (234 aa)). The tract at residues 250–338 (FNPLLLKKVD…DLAKRFEDQF (89 aa)) is alpha C-terminal domain (alpha-CTD).

Belongs to the RNA polymerase alpha chain family. In terms of assembly, homodimer. The RNAP catalytic core consists of 2 alpha, 1 beta, 1 beta' and 1 omega subunit. When a sigma factor is associated with the core the holoenzyme is formed, which can initiate transcription.

It carries out the reaction RNA(n) + a ribonucleoside 5'-triphosphate = RNA(n+1) + diphosphate. In terms of biological role, DNA-dependent RNA polymerase catalyzes the transcription of DNA into RNA using the four ribonucleoside triphosphates as substrates. The sequence is that of DNA-directed RNA polymerase subunit alpha from Cereibacter sphaeroides (strain ATCC 17029 / ATH 2.4.9) (Rhodobacter sphaeroides).